Here is a 158-residue protein sequence, read N- to C-terminus: Protein Smg homolog (158 aa).

Belongs to the Smg family.

The protein is Protein Smg homolog of Vibrio atlanticus (strain LGP32) (Vibrio splendidus (strain Mel32)).